Reading from the N-terminus, the 149-residue chain is Cell division protein SepF (149 aa).

The protein belongs to the SepF family. As to quaternary structure, homodimer. Interacts with FtsZ.

It localises to the cytoplasm. Functionally, cell division protein that is part of the divisome complex and is recruited early to the Z-ring. Probably stimulates Z-ring formation, perhaps through the cross-linking of FtsZ protofilaments. Its function overlaps with FtsA. The sequence is that of Cell division protein SepF from Clostridium perfringens (strain ATCC 13124 / DSM 756 / JCM 1290 / NCIMB 6125 / NCTC 8237 / Type A).